The chain runs to 155 residues: Large ribosomal subunit protein uL30 (155 aa).

This sequence belongs to the universal ribosomal protein uL30 family. In terms of assembly, part of the 50S ribosomal subunit.

The polypeptide is Large ribosomal subunit protein uL30 (Pyrococcus horikoshii (strain ATCC 700860 / DSM 12428 / JCM 9974 / NBRC 100139 / OT-3)).